We begin with the raw amino-acid sequence, 339 residues long: tRNA-specific 2-thiouridylase MnmA (339 aa).

ATP contacts are provided by residues 6 to 13 and M32; that span reads AMSGGVDS. C92 functions as the Nucleophile in the catalytic mechanism. Residues C92 and C186 are joined by a disulfide bond. ATP is bound at residue G116. Residues 134 to 136 are interaction with tRNA; the sequence is KDQ. C186 (cysteine persulfide intermediate) is an active-site residue. Residues 288-289 are interaction with tRNA; sequence RY.

Belongs to the MnmA/TRMU family.

The protein localises to the cytoplasm. The enzyme catalyses S-sulfanyl-L-cysteinyl-[protein] + uridine(34) in tRNA + AH2 + ATP = 2-thiouridine(34) in tRNA + L-cysteinyl-[protein] + A + AMP + diphosphate + H(+). Catalyzes the 2-thiolation of uridine at the wobble position (U34) of tRNA, leading to the formation of s(2)U34. In Campylobacter curvus (strain 525.92), this protein is tRNA-specific 2-thiouridylase MnmA.